The chain runs to 809 residues: Protein TOC75, chloroplastic (809 aa).

A compositionally biased stretch (polar residues) spans 1–17 (MRTSVIPNRLTPTLTTH). A chloroplast-targeting transit peptide spans 1–35 (MRTSVIPNRLTPTLTTHPSRRRNDHITTRTSSLKC). The segment at 1-44 (MRTSVIPNRLTPTLTTHPSRRRNDHITTRTSSLKCHLSPSSGDN) is disordered. The N-terminal 96 residues, 36 to 131 (HLSPSSGDNN…RILSPARAIA (96 aa)), are a transit peptide targeting the chloroplast; outer membrane. At 132–143 (DEPKSEDWDSHE) the chain is on the chloroplast intermembrane side. A beta stranded membrane pass occupies residues 144–152 (LPADITVLL). At 153–160 (GRLSGFKK) the chain is on the cytoplasmic side. Residues 161 to 169 (YKISDILFF) form a beta stranded membrane-spanning segment. At 170–225 (DRNKKSKVETQDSFLDMVSLKPGGVYTKAQLQKELESLATCGMFEKVDMEGKTNAD) the chain is on the chloroplast intermembrane side. Residues 226 to 234 (GSLGLTISF) traverse the membrane as a beta stranded segment. Topologically, residues 235-247 (AESMWERADRFRC) are cytoplasmic. Residues 248–254 (INVGLMG) traverse the membrane as a beta stranded segment. At 255 to 357 (QSKPVEMDPD…VVCEVVEGDI (103 aa)) the chain is on the chloroplast intermembrane side. Residues 358-365 (TKLSIQYL) traverse the membrane as a beta stranded segment. At 366–410 (DKLGNVVEGNTEGPVVQRELPKQLLPGHTFNIEAGKQALRNINSL) the chain is on the cytoplasmic side. A beta stranded transmembrane segment spans residues 411–418 (ALFSNIEV). Over 419–427 (NPRPDEMNE) the chain is Chloroplast intermembrane. The chain crosses the membrane as a beta stranded span at residues 428-436 (GSIIVEIKL). At 437 to 442 (KELEQK) the chain is on the cytoplasmic side. A beta stranded transmembrane segment spans residues 443-452 (SAEVSTEWSI). Over 453-464 (VPGRGGRPTLAS) the chain is Chloroplast intermembrane. Residues 465–473 (LQPGGTITF) form a beta stranded membrane-spanning segment. Residues 474 to 500 (EHRNLQGLNRSLTGSVTTSNFLNPQDD) lie on the Cytoplasmic side of the membrane. Residues 501-509 (LAFKMEYAH) form a beta stranded membrane-spanning segment. The Chloroplast intermembrane segment spans residues 510 to 553 (PYLDGVDNPRNRTLRVSCFNSRKLSPVFTGGPGVDEVPSIWVDR). A beta stranded transmembrane segment spans residues 554-561 (AGVKANIT). Residues 562-569 (ENFSRQSK) lie on the Cytoplasmic side of the membrane. A beta stranded transmembrane segment spans residues 570 to 577 (FTYGLVME). Over 578–684 (EIITRDESNH…VEEGAGKSPP (107 aa)) the chain is Chloroplast intermembrane. A beta stranded membrane pass occupies residues 685–693 (PVLVLHGHY). The Cytoplasmic portion of the chain corresponds to 694-705 (GGCVGDLPSYDA). The chain crosses the membrane as a beta stranded span at residues 706–714 (FTLGGPYSV). At 715 to 776 (RGYNMGEIGA…VYRRMGQGSS (62 aa)) the chain is on the chloroplast intermembrane side. A beta stranded transmembrane segment spans residues 777 to 783 (YGAGMKL). Over 784–797 (GLVRAEYAVDHNSG) the chain is Cytoplasmic. The chain crosses the membrane as a beta stranded span at residues 798–805 (TGAVFFRF). Residues 806–809 (GERF) lie on the Chloroplast intermembrane side of the membrane.

This sequence belongs to the TOC75 family. As to quaternary structure, part of the TOC core complex that includes a protein for the specific recognition of transit peptides surrounded by a ring composed of four proteins forming translocation channels, and four to five GTP-binding proteins providing energy. This core complex can interact with components of the TIC complex to form a larger import complex. Chloroplastic protein precursors such as prSS (precursor of the RuBisCO small subunit) also interact with these complexes. TOC75 interacts with OEP14, TOC34/OEP34, TOC86/OEP86, TIC55, TIC110/IEP110 and CLPC. In terms of tissue distribution, mostly expressed in young leaves, also present in old leaves, roots and stems (at protein level).

It is found in the plastid. The protein localises to the chloroplast outer membrane. Its function is as follows. Mediates the insertion of proteins targeted to the outer membrane of chloroplasts. Required for the import of protein precursors into chloroplasts. Forms the voltage-dependent preprotein translocation channels (hydrophilic beta barrel) of the TOC complex in the chloroplastic outer membrane. The narrowest inner diameter of this channel is approximately 14 Angstroms. The sequence is that of Protein TOC75, chloroplastic (TOC75) from Pisum sativum (Garden pea).